The sequence spans 160 residues: uncharacterized protein (160 aa).

Transmembrane regions (helical) follow at residues 7–27 (IFLKIALVLIGIPILALCIFL), 48–68 (LVFIYLYVTAIPFYFALYQAF), 95–115 (AVTISIFYAAGMPVFYLMAEI), and 121–141 (IIVIGLVIIFASMVIAVFAAV).

Its subcellular location is the cell membrane. This is an uncharacterized protein from Bacillus subtilis (strain 168).